A 357-amino-acid polypeptide reads, in one-letter code: H-2 class I histocompatibility antigen, D-37 alpha chain (357 aa).

The N-terminal stretch at 1–20 (MLLFAHLLQLLVSATVPTQS) is a signal peptide. The tract at residues 21 to 110 (SPHSLRYFTT…LLGYYNQSND (90 aa)) is alpha-1. The Extracellular segment spans residues 21–304 (SPHSLRYFTT…EPPPSTVSNM (284 aa)). The N-linked (GlcNAc...) asparagine glycan is linked to asparagine 106. The alpha-2 stretch occupies residues 111-202 (ESHTLQWMYG…RLGNETLQRS (92 aa)). A disulfide bridge links cysteine 121 with cysteine 184. Asparagine 196 carries N-linked (GlcNAc...) asparagine glycosylation. The alpha-3 stretch occupies residues 203–294 (DPPKAHVTHH…GLPEPLTLRW (92 aa)). Residues 205 to 293 (PKAHVTHHPR…EGLPEPLTLR (89 aa)) form the Ig-like C1-type domain. Cysteine 223 and cysteine 279 form a disulfide bridge. The interval 295–304 (EPPPSTVSNM) is connecting peptide. A helical transmembrane segment spans residues 305-327 (VIIAVLVVLGAVIILGAVVAFVM). Residues 328-357 (KRRRHIGVKGCYAHVLGSKSFQTSDWPQKA) lie on the Cytoplasmic side of the membrane. Serine 347 is modified (phosphoserine).

Belongs to the MHC class I family. Heterodimer of an alpha chain and a beta chain (beta-2-microglobulin).

The protein localises to the membrane. In terms of biological role, involved in the presentation of foreign antigens to the immune system. The protein is H-2 class I histocompatibility antigen, D-37 alpha chain (H2-T23) of Mus musculus (Mouse).